The primary structure comprises 72 residues: Translation initiation factor IF-1 (72 aa).

One can recognise an S1-like domain in the interval 1-72; the sequence is MAKDDVIEVE…TRGRIVWRGK (72 aa).

It belongs to the IF-1 family. In terms of assembly, component of the 30S ribosomal translation pre-initiation complex which assembles on the 30S ribosome in the order IF-2 and IF-3, IF-1 and N-formylmethionyl-tRNA(fMet); mRNA recruitment can occur at any time during PIC assembly.

The protein localises to the cytoplasm. Its function is as follows. One of the essential components for the initiation of protein synthesis. Stabilizes the binding of IF-2 and IF-3 on the 30S subunit to which N-formylmethionyl-tRNA(fMet) subsequently binds. Helps modulate mRNA selection, yielding the 30S pre-initiation complex (PIC). Upon addition of the 50S ribosomal subunit IF-1, IF-2 and IF-3 are released leaving the mature 70S translation initiation complex. This Caldanaerobacter subterraneus subsp. tengcongensis (strain DSM 15242 / JCM 11007 / NBRC 100824 / MB4) (Thermoanaerobacter tengcongensis) protein is Translation initiation factor IF-1.